Consider the following 324-residue polypeptide: 4-hydroxyphenylpyruvate 3-dimethylallyltransferase (324 aa).

Positions 160 and 281 each coordinate substrate.

The protein belongs to the aromatic prenyltransferase family. Monomer.

The catalysed reaction is 3-(4-hydroxyphenyl)pyruvate + dimethylallyl diphosphate = 3-dimethylallyl-4-hydroxyphenylpyruvate + diphosphate. It functions in the pathway antibiotic biosynthesis. Its function is as follows. Magnesium-independent aromatic prenyltransferase that catalyzes the irreversible transfer of a dimethylallyl group to 4-hydroxyphenylpyruvate to produce the ring A structure in the clorobiocin biosynthesis pathway. Clorobiocin is an aminocoumarin family antibiotic. In Streptomyces roseochromogenus subsp. oscitans, this protein is 4-hydroxyphenylpyruvate 3-dimethylallyltransferase.